A 611-amino-acid chain; its full sequence is Glutamine--fructose-6-phosphate aminotransferase [isomerizing] (611 aa).

Cysteine 2 functions as the Nucleophile; for GATase activity in the catalytic mechanism. Residues cysteine 2–aspartate 219 enclose the Glutamine amidotransferase type-2 domain. 2 consecutive SIS domains span residues alanine 287 to serine 427 and valine 460 to proline 601. The active-site For Fru-6P isomerization activity is the lysine 606.

In terms of assembly, homodimer.

Its subcellular location is the cytoplasm. The enzyme catalyses D-fructose 6-phosphate + L-glutamine = D-glucosamine 6-phosphate + L-glutamate. Catalyzes the first step in hexosamine metabolism, converting fructose-6P into glucosamine-6P using glutamine as a nitrogen source. In Pseudomonas syringae pv. tomato (strain ATCC BAA-871 / DC3000), this protein is Glutamine--fructose-6-phosphate aminotransferase [isomerizing].